The chain runs to 383 residues: S-adenosylmethionine synthase 1 (383 aa).

His-15 contacts ATP. Asp-17 contributes to the Mg(2+) binding site. A K(+)-binding site is contributed by Glu-43. Positions 56 and 99 each coordinate L-methionine. A flexible loop region spans residues Gln-99–Arg-109. ATP-binding positions include Asp-162 to Lys-164, Arg-228 to Phe-229, Asp-237, Arg-243 to Lys-244, Ala-260, and Lys-264. Asp-237 contacts L-methionine. L-methionine is bound at residue Lys-268.

The protein belongs to the AdoMet synthase family. Homotetramer; dimer of dimers. Mg(2+) serves as cofactor. The cofactor is K(+).

The protein resides in the cytoplasm. It carries out the reaction L-methionine + ATP + H2O = S-adenosyl-L-methionine + phosphate + diphosphate. The protein operates within amino-acid biosynthesis; S-adenosyl-L-methionine biosynthesis; S-adenosyl-L-methionine from L-methionine: step 1/1. Its function is as follows. Catalyzes the formation of S-adenosylmethionine (AdoMet) from methionine and ATP. The overall synthetic reaction is composed of two sequential steps, AdoMet formation and the subsequent tripolyphosphate hydrolysis which occurs prior to release of AdoMet from the enzyme. This chain is S-adenosylmethionine synthase 1, found in Rhodospirillum rubrum (strain ATCC 11170 / ATH 1.1.1 / DSM 467 / LMG 4362 / NCIMB 8255 / S1).